A 784-amino-acid polypeptide reads, in one-letter code: Lon protease (784 aa).

One can recognise a Lon N-terminal domain in the interval 11 to 204 (IPVLPLRDVV…YLMAMMESEI (194 aa)). 356-363 (GPPGVGKT) contributes to the ATP binding site. The region spanning 592-773 (ENRVGQVTGL…EEVLALALQN (182 aa)) is the Lon proteolytic domain. Catalysis depends on residues serine 679 and lysine 722.

The protein belongs to the peptidase S16 family. Homohexamer. Organized in a ring with a central cavity.

The protein resides in the cytoplasm. It catalyses the reaction Hydrolysis of proteins in presence of ATP.. Functionally, ATP-dependent serine protease that mediates the selective degradation of mutant and abnormal proteins as well as certain short-lived regulatory proteins. Required for cellular homeostasis and for survival from DNA damage and developmental changes induced by stress. Degrades polypeptides processively to yield small peptide fragments that are 5 to 10 amino acids long. Binds to DNA in a double-stranded, site-specific manner. In Erwinia amylovora (Fire blight bacteria), this protein is Lon protease.